A 139-amino-acid polypeptide reads, in one-letter code: FAD synthase (139 aa).

ATP is bound by residues Val8–Phe9, His13–His16, Asp92, and Tyr119.

This sequence belongs to the archaeal FAD synthase family. Homodimer. A divalent metal cation is required as a cofactor.

The enzyme catalyses FMN + ATP + H(+) = FAD + diphosphate. Its pathway is cofactor biosynthesis; FAD biosynthesis; FAD from FMN: step 1/1. Catalyzes the transfer of the AMP portion of ATP to flavin mononucleotide (FMN) to produce flavin adenine dinucleotide (FAD) coenzyme. This chain is FAD synthase, found in Picrophilus torridus (strain ATCC 700027 / DSM 9790 / JCM 10055 / NBRC 100828 / KAW 2/3).